Reading from the N-terminus, the 361-residue chain is Mitogen-activated protein kinase 1 (361 aa).

The Protein kinase domain occupies 28–316 (YINLAYIGEG…VEAALAHPYL (289 aa)). Residues 34 to 42 (IGEGAYGMV) and lysine 57 contribute to the ATP site. Catalysis depends on aspartate 152, which acts as the Proton acceptor. Threonine 188 carries the phosphothreonine modification. A TXY motif is present at residues 188 to 190 (TEY). Tyrosine 190 is subject to Phosphotyrosine.

Belongs to the protein kinase superfamily. CMGC Ser/Thr protein kinase family. MAP kinase subfamily. As to quaternary structure, interacts with CDK2AP2. Requires Mg(2+) as cofactor. Dually phosphorylated on Thr-188 and Tyr-190, which activates the enzyme. In terms of tissue distribution, expressed in the central nervous system, kidney, liver, intestine and the hematopoietic system. Also found in heart, muscle, pancreas and lung.

The protein localises to the cytoplasm. It localises to the cytoskeleton. The protein resides in the microtubule organizing center. It is found in the centrosome. Its subcellular location is the spindle. It catalyses the reaction L-seryl-[protein] + ATP = O-phospho-L-seryl-[protein] + ADP + H(+). The catalysed reaction is L-threonyl-[protein] + ATP = O-phospho-L-threonyl-[protein] + ADP + H(+). Activated by tyrosine phosphorylation during the M phase of the meiotic cell cycle. Dephosphorylated and inactivated by DUSP1. Functionally, serine/threonine kinase which acts as an essential component of the MAP kinase signal transduction pathway. Plays an important role in the MAPK/ERK cascade. Depending on the cellular context, this cascade mediates diverse biological functions such as cell growth, adhesion, survival and differentiation through the regulation of transcription, translation, cytoskeletal rearrangements. The MAPK/ERK cascade also plays a role in initiation and regulation of meiosis, mitosis, and postmitotic functions in differentiated cells by phosphorylating a number of transcription factors. Many of the substrates are localized in the nucleus, and seem to participate in the regulation of transcription upon stimulation. However, other substrates are found in the cytosol as well as in other cellular organelles, and those are responsible for processes such as translation, mitosis and apoptosis. Moreover, the MAPK/ERK cascade is also involved in the regulation of the endosomal dynamics, including lysosome processing and endosome cycling through the perinuclear recycling compartment (PNRC); as well as in the fragmentation of the Golgi apparatus during mitosis. Phosphorylates microtubule-associated protein 2 (MAP2), myelin basic protein (MBP) and Elk-1. Phosphorylates dual specificity protein phosphatase 1 (DUSP1) during meiosis, increasing its stability. Activated by M phase promoting factor (MPF). Plays a role in the spindle assembly checkpoint. This chain is Mitogen-activated protein kinase 1 (mapk1), found in Xenopus laevis (African clawed frog).